The primary structure comprises 2285 residues: AT-rich interactive domain-containing protein 1A (2285 aa).

Residues 1–14 (MAAQVAPAAASSLG) show a composition bias toward low complexity. Disordered regions lie at residues 1–820 (MAAQ…ALPN) and 978–1005 (ATKM…TTTN). A2 bears the N-acetylalanine mark. A compositionally biased stretch (basic and acidic residues) spans 23-35 (ELKKAEQQQREEA). 2 positions are modified to phosphoserine: S58 and S79. Gly residues-rich tracts occupy residues 79-95 (SNGG…GGPG) and 121-130 (PGGGGGGSSD). 3 stretches are compositionally biased toward low complexity: residues 131–142 (GVGAPPHSAAAA), 212–221 (YNSYYPNRSA), and 228–265 (AYAL…SSSS). The residue at position 233 (S233) is a Phosphoserine. Over residues 273-286 (AMGGGGPSAAGGGT) the composition is skewed to gly residues. Phosphothreonine is present on T286. The short motif at 295–299 (LNQLL) is the LXXLL element. A compositionally biased stretch (polar residues) spans 295–306 (LNQLLTSPSSAR). S301 is modified (phosphoserine). The segment covering 310 to 327 (GYPGGDYSGGPQDGGAGK) has biased composition (gly residues). The segment covering 338–353 (GAAAAAAAAAAASGGA) has biased composition (low complexity). Residues S363 and S382 each carry the phosphoserine modification. The span at 400-425 (PYSQQQGPPSGPQQGHGYPGQPYGSQ) shows a compositional bias: low complexity. An Asymmetric dimethylarginine modification is found at R429. Low complexity-rich tracts occupy residues 447–457 (YTQQIPPYGQQ), 465–546 (QGQT…QHPQ), and 553–595 (QPQA…YSQQ). At S604 the chain carries Phosphoserine. Over residues 610-621 (SQASSAPSMTSS) the composition is skewed to low complexity. Positions 628 to 637 (MNLSLQSRPS) are enriched in polar residues. The segment covering 658-674 (SPGVSTSGISSSQGEQS) has biased composition (low complexity). Polar residues predominate over residues 675–685 (NPAQSPFSPHT). Residues S696, S698, S702, S730, S764, and S772 each carry the phosphoserine modification. 2 stretches are compositionally biased toward polar residues: residues 730-747 (SGQS…SSIA) and 755-793 (RNPQ…QNSM). Residues 797–807 (GPQGGQYGPQG) show a composition bias toward gly residues. Residues 808–820 (GYPRQPNYNALPN) show a composition bias toward low complexity. The ARID domain occupies 1017–1108 (EPERKMWVDR…CLYAFECKIE (92 aa)). Disordered regions lie at residues 1113-1483 (PPPD…MMGG) and 1539-1603 (ANHE…SPSK). A compositionally biased stretch (low complexity) spans 1141–1154 (MQGPQTPQSTSSSM). The span at 1162-1177 (PPTPASTPHSQIPPLP) shows a compositional bias: pro residues. A Phosphoserine modification is found at S1184. The segment covering 1194-1219 (GSDSTFQKRNSMTPNPGYQPSMNTSD) has biased composition (polar residues). S1235 carries the phosphoserine modification. R1276 bears the Omega-N-methylarginine mark. Composition is skewed to polar residues over residues 1299–1315 (NMST…SNPD) and 1339–1356 (YGNQ…PFPS). Residues 1357–1367 (QQTTMYQQQQQ) show a composition bias toward low complexity. Positions 1368-1387 (NYKRPMDGTYGPPAKRHEGE) match the Nuclear localization signal motif. Positions 1396–1425 (GQGQPQQQQLPPAQPQPASQQQAAQPSPQQ) are enriched in low complexity. Residues 1468–1477 (PGTNAQQNMP) show a composition bias toward polar residues. The segment covering 1554–1577 (PYGPSAPVPPMTRPPPSNYQPPPS) has biased composition (pro residues). A Phosphoserine modification is found at S1604. K1612 is subject to N6-acetyllysine. The short motif at 1709 to 1713 (LPGLL) is the LXXLL element. Disordered stretches follow at residues 1747-1774 (PGRF…PKLE) and 1859-1907 (FESK…EKRI). Phosphoserine occurs at positions 1751 and 1754. A compositionally biased stretch (acidic residues) spans 1761–1774 (GGEEEEELLGPKLE). The span at 1886–1895 (EGTPGTTDQE) shows a compositional bias: low complexity. T1888 is modified (phosphothreonine). K1905 carries the post-translational modification N6-acetyllysine. A phosphoserine mark is found at S1929 and S1944. Short sequence motifs (LXXLL) lie at residues 1967-1971 (LCTLL) and 2085-2089 (LDGLL).

As to quaternary structure, component of SWI/SNF chromatin remodeling complexes, in some of which it can be mutually exclusive with ARID1B/BAF250B. The canonical complex contains a catalytic subunit (either SMARCA4/BRG1/BAF190A or SMARCA2/BRM/BAF190B) and at least SMARCE1, ACTL6A/BAF53, SMARCC1/BAF155, SMARCC2/BAF170, and SMARCB1/SNF5/BAF47. Other subunits specific to each of the complexes may also be present permitting several possible combinations developmentally and tissue specific. Component of the BAF (SWI/SNF-A) complex, which includes at least actin (ACTB), ARID1A/BAF250A, ARID1B/BAF250B, SMARCA2/BRM, SMARCA4/BRG1/BAF190A, ACTL6A/BAF53, ACTL6B/BAF53B, SMARCE1/BAF57, SMARCC1/BAF155, SMARCC2/BAF170, SMARCB1/SNF5/INI1, and one or more SMARCD1/BAF60A, SMARCD2/BAF60B, or SMARCD3/BAF60C. In muscle cells, the BAF complex also contains DPF3. Component of neural progenitors-specific chromatin remodeling complex (npBAF complex) composed of at least, ARID1A/BAF250A or ARID1B/BAF250B, SMARCD1/BAF60A, SMARCD3/BAF60C, SMARCA2/BRM/BAF190B, SMARCA4/BRG1/BAF190A, SMARCB1/BAF47, SMARCC1/BAF155, SMARCE1/BAF57, SMARCC2/BAF170, PHF10/BAF45A, ACTL6A/BAF53A and actin. Component of neuron-specific chromatin remodeling complex (nBAF complex) composed of at least, ARID1A/BAF250A or ARID1B/BAF250B, SMARCD1/BAF60A, SMARCD3/BAF60C, SMARCA2/BRM/BAF190B, SMARCA4/BRG1/BAF190A, SMARCB1/BAF47, SMARCC1/BAF155, SMARCE1/BAF57, SMARCC2/BAF170, DPF1/BAF45B, DPF3/BAF45C, ACTL6B/BAF53B and actin. Component of a SWI/SNF-like EBAFa complex, at least composed of SMARCA4/BRG1/BAF190A, SMARCB1/BAF47/SNF5, ACTL6A/BAF53A, SMARCE1/BAF57, SMARCD1/BAF60A, SMARCC1/BAF155, SMARCC2/BAF170, BAF250A and MLLT1/ENL. Interacts through its C-terminus with SMARCA2/BRM/BAF190B and SMARCA4/BRG1/BAF190A. Interacts with SMARCC1/BAF155. Interacts with FOS, FOSB isoform 1 and 2, FOSL1 and FOSL2. Highly expressed in spleen, thymus, prostate, testis, ovary, small intestine, colon, and PBL, and at a much lower level in heart, brain, placenta, lung, liver, skeletal muscle, kidney, and pancreas.

It localises to the nucleus. Functionally, involved in transcriptional activation and repression of select genes by chromatin remodeling (alteration of DNA-nucleosome topology). Component of SWI/SNF chromatin remodeling complexes that carry out key enzymatic activities, changing chromatin structure by altering DNA-histone contacts within a nucleosome in an ATP-dependent manner. Binds DNA non-specifically. Belongs to the neural progenitors-specific chromatin remodeling complex (npBAF complex) and the neuron-specific chromatin remodeling complex (nBAF complex). During neural development a switch from a stem/progenitor to a postmitotic chromatin remodeling mechanism occurs as neurons exit the cell cycle and become committed to their adult state. The transition from proliferating neural stem/progenitor cells to postmitotic neurons requires a switch in subunit composition of the npBAF and nBAF complexes. As neural progenitors exit mitosis and differentiate into neurons, npBAF complexes which contain ACTL6A/BAF53A and PHF10/BAF45A, are exchanged for homologous alternative ACTL6B/BAF53B and DPF1/BAF45B or DPF3/BAF45C subunits in neuron-specific complexes (nBAF). The npBAF complex is essential for the self-renewal/proliferative capacity of the multipotent neural stem cells. The nBAF complex along with CREST plays a role regulating the activity of genes essential for dendrite growth. This is AT-rich interactive domain-containing protein 1A (ARID1A) from Homo sapiens (Human).